The following is a 283-amino-acid chain: Elongation factor Ts (283 aa).

Positions Thr80 to Val83 are involved in Mg(2+) ion dislocation from EF-Tu.

This sequence belongs to the EF-Ts family.

The protein localises to the cytoplasm. In terms of biological role, associates with the EF-Tu.GDP complex and induces the exchange of GDP to GTP. It remains bound to the aminoacyl-tRNA.EF-Tu.GTP complex up to the GTP hydrolysis stage on the ribosome. The sequence is that of Elongation factor Ts from Haemophilus influenzae (strain PittGG).